The sequence spans 321 residues: 5,10-methylenetetrahydromethanopterin reductase (321 aa).

It belongs to the mer family. As to quaternary structure, homotetramer.

The protein resides in the cytoplasm. It carries out the reaction 5-methyl-5,6,7,8-tetrahydromethanopterin + oxidized coenzyme F420-(gamma-L-Glu)(n) + H(+) = 5,10-methylenetetrahydromethanopterin + reduced coenzyme F420-(gamma-L-Glu)(n). Its pathway is one-carbon metabolism; methanogenesis from CO(2); methyl-coenzyme M from 5,10-methylene-5,6,7,8-tetrahydromethanopterin: step 1/2. Functionally, catalyzes the reversible reduction of methylene-H(4)MPT to methyl-H(4)MPT. In Methanothermobacter marburgensis (strain ATCC BAA-927 / DSM 2133 / JCM 14651 / NBRC 100331 / OCM 82 / Marburg) (Methanobacterium thermoautotrophicum), this protein is 5,10-methylenetetrahydromethanopterin reductase.